A 278-amino-acid polypeptide reads, in one-letter code: Ribosomal protein L11 methyltransferase (278 aa).

4 residues coordinate S-adenosyl-L-methionine: Thr-131, Gly-152, Asp-173, and Asn-214.

It belongs to the methyltransferase superfamily. PrmA family.

Its subcellular location is the cytoplasm. It carries out the reaction L-lysyl-[protein] + 3 S-adenosyl-L-methionine = N(6),N(6),N(6)-trimethyl-L-lysyl-[protein] + 3 S-adenosyl-L-homocysteine + 3 H(+). Functionally, methylates ribosomal protein L11. In Campylobacter lari (strain RM2100 / D67 / ATCC BAA-1060), this protein is Ribosomal protein L11 methyltransferase.